Reading from the N-terminus, the 492-residue chain is Glutamyl-tRNA(Gln) amidotransferase subunit A (492 aa).

Active-site charge relay system residues include lysine 78 and serine 158. Residue serine 182 is the Acyl-ester intermediate of the active site.

The protein belongs to the amidase family. GatA subfamily. Heterotrimer of A, B and C subunits.

It catalyses the reaction L-glutamyl-tRNA(Gln) + L-glutamine + ATP + H2O = L-glutaminyl-tRNA(Gln) + L-glutamate + ADP + phosphate + H(+). Allows the formation of correctly charged Gln-tRNA(Gln) through the transamidation of misacylated Glu-tRNA(Gln) in organisms which lack glutaminyl-tRNA synthetase. The reaction takes place in the presence of glutamine and ATP through an activated gamma-phospho-Glu-tRNA(Gln). The polypeptide is Glutamyl-tRNA(Gln) amidotransferase subunit A (Rhodopseudomonas palustris (strain ATCC BAA-98 / CGA009)).